Consider the following 436-residue polypeptide: Probable D-serine dehydratase (436 aa).

At Lys-111 the chain carries N6-(pyridoxal phosphate)lysine.

This sequence belongs to the serine/threonine dehydratase family. DsdA subfamily. The cofactor is pyridoxal 5'-phosphate.

The enzyme catalyses D-serine = pyruvate + NH4(+). The protein is Probable D-serine dehydratase of Lactiplantibacillus plantarum (strain ATCC BAA-793 / NCIMB 8826 / WCFS1) (Lactobacillus plantarum).